The primary structure comprises 189 residues: ATP synthase subunit delta (189 aa).

The protein belongs to the ATPase delta chain family. F-type ATPases have 2 components, F(1) - the catalytic core - and F(0) - the membrane proton channel. F(1) has five subunits: alpha(3), beta(3), gamma(1), delta(1), epsilon(1). F(0) has three main subunits: a(1), b(2) and c(10-14). The alpha and beta chains form an alternating ring which encloses part of the gamma chain. F(1) is attached to F(0) by a central stalk formed by the gamma and epsilon chains, while a peripheral stalk is formed by the delta and b chains.

The protein localises to the cell inner membrane. Its function is as follows. F(1)F(0) ATP synthase produces ATP from ADP in the presence of a proton or sodium gradient. F-type ATPases consist of two structural domains, F(1) containing the extramembraneous catalytic core and F(0) containing the membrane proton channel, linked together by a central stalk and a peripheral stalk. During catalysis, ATP synthesis in the catalytic domain of F(1) is coupled via a rotary mechanism of the central stalk subunits to proton translocation. In terms of biological role, this protein is part of the stalk that links CF(0) to CF(1). It either transmits conformational changes from CF(0) to CF(1) or is implicated in proton conduction. In Methylorubrum populi (strain ATCC BAA-705 / NCIMB 13946 / BJ001) (Methylobacterium populi), this protein is ATP synthase subunit delta.